We begin with the raw amino-acid sequence, 174 residues long: Ribulose bisphosphate carboxylase small subunit, chloroplastic 1 (174 aa).

A chloroplast-targeting transit peptide spans 1-45 (MAPAVMASSATTVAPFQGLKSTAGLPVSRRSRGSLGSVSNGGRIR).

It belongs to the RuBisCO small chain family. Heterohexadecamer of 8 large and 8 small subunits.

It is found in the plastid. It localises to the chloroplast. Functionally, ruBisCO catalyzes two reactions: the carboxylation of D-ribulose 1,5-bisphosphate, the primary event in carbon dioxide fixation, as well as the oxidative fragmentation of the pentose substrate. Both reactions occur simultaneously and in competition at the same active site. Although the small subunit is not catalytic it is essential for maximal activity. In Triticum aestivum (Wheat), this protein is Ribulose bisphosphate carboxylase small subunit, chloroplastic 1.